We begin with the raw amino-acid sequence, 244 residues long: Small ribosomal subunit protein eS4 (244 aa).

The S4 RNA-binding domain occupies 37–123 (VPLAILLKYY…AKYKFVRIMN (87 aa)).

This sequence belongs to the eukaryotic ribosomal protein eS4 family.

The chain is Small ribosomal subunit protein eS4 (rps4e) from Sulfolobus acidocaldarius (strain ATCC 33909 / DSM 639 / JCM 8929 / NBRC 15157 / NCIMB 11770).